We begin with the raw amino-acid sequence, 160 residues long: Transcription elongation factor GreA (160 aa).

Positions 49-75 (SEYDEAKNDQAFTEGRIIQLENMLKNA) form a coiled coil.

The protein belongs to the GreA/GreB family.

In terms of biological role, necessary for efficient RNA polymerase transcription elongation past template-encoded arresting sites. The arresting sites in DNA have the property of trapping a certain fraction of elongating RNA polymerases that pass through, resulting in locked ternary complexes. Cleavage of the nascent transcript by cleavage factors such as GreA or GreB allows the resumption of elongation from the new 3'terminus. GreA releases sequences of 2 to 3 nucleotides. This chain is Transcription elongation factor GreA, found in Clostridium beijerinckii (strain ATCC 51743 / NCIMB 8052) (Clostridium acetobutylicum).